Reading from the N-terminus, the 435-residue chain is Legumain (435 aa).

An N-terminal signal peptide occupies residues 1-17; it reads MTWRVAVLLSLVLGAGA. Asparagine 93 carries an N-linked (GlcNAc...) asparagine glycan. Histidine 150 is an active-site residue. An N-linked (GlcNAc...) asparagine glycan is attached at asparagine 169. Residue cysteine 191 is the Nucleophile of the active site. Asparagine 215, asparagine 265, and asparagine 274 each carry an N-linked (GlcNAc...) asparagine glycan. The propeptide occupies 326–435; it reads NMKESQVLVG…AMDKVCLSHY (110 aa). Intrachain disulfides connect cysteine 380–cysteine 414 and cysteine 392–cysteine 431.

This sequence belongs to the peptidase C13 family. Homodimer before autocatalytic removal of the propeptide. Monomer after autocatalytic processing. May interact with integrins. Post-translationally, activated by autocatalytic processing at pH 4. Detected in kidney cortex (at protein level).

The protein localises to the lysosome. It catalyses the reaction Hydrolysis of proteins and small molecule substrates at -Asn-|-Xaa- bonds.. Has a strict specificity for hydrolysis of asparaginyl bonds. Can also cleave aspartyl bonds slowly, especially under acidic conditions. Involved in the processing of proteins for MHC class II antigen presentation in the lysosomal/endosomal system. Also involved in MHC class I antigen presentation in cross-presenting dendritic cells by mediating cleavage and maturation of Perforin-2 (MPEG1), thereby promoting antigen translocation in the cytosol. Required for normal lysosomal protein degradation in renal proximal tubules. Required for normal degradation of internalized EGFR. Plays a role in the regulation of cell proliferation via its role in EGFR degradation. In Rattus norvegicus (Rat), this protein is Legumain (Lgmn).